The chain runs to 377 residues: Anhydro-N-acetylmuramic acid kinase (377 aa).

An ATP-binding site is contributed by 12-19; it reads GTSLDGID.

It belongs to the anhydro-N-acetylmuramic acid kinase family.

It catalyses the reaction 1,6-anhydro-N-acetyl-beta-muramate + ATP + H2O = N-acetyl-D-muramate 6-phosphate + ADP + H(+). The protein operates within amino-sugar metabolism; 1,6-anhydro-N-acetylmuramate degradation. Its pathway is cell wall biogenesis; peptidoglycan recycling. In terms of biological role, catalyzes the specific phosphorylation of 1,6-anhydro-N-acetylmuramic acid (anhMurNAc) with the simultaneous cleavage of the 1,6-anhydro ring, generating MurNAc-6-P. Is required for the utilization of anhMurNAc either imported from the medium or derived from its own cell wall murein, and thus plays a role in cell wall recycling. This is Anhydro-N-acetylmuramic acid kinase from Methylorubrum extorquens (strain CM4 / NCIMB 13688) (Methylobacterium extorquens).